Reading from the N-terminus, the 43-residue chain is Defensin (43 aa).

Disulfide bonds link cysteine 3-cysteine 34, cysteine 20-cysteine 39, and cysteine 24-cysteine 41.

It is found in the secreted. Functionally, antibacterial peptide active against Gram-positive and Gram-negative bacteria. The chain is Defensin from Palomena prasina (Green shield bug).